Reading from the N-terminus, the 1145-residue chain is Adenylate cyclase type 3 (1145 aa).

Residues 1 to 79 (MPRNQGFSDP…FKRQRHETLL (79 aa)) lie on the Cytoplasmic side of the membrane. Transmembrane regions (helical) follow at residues 80–100 (VLVV…AVVF), 105–125 (LAPL…FVLC), 139–159 (VPYL…GLNF), 173–193 (AFFV…IVII), and 226–246 (ILAN…SYYM). Mg(2+) contacts are provided by Asp-324, Ile-325, and Asp-368. ATP is bound by residues 324-329 (DIVGFT) and 366-368 (LGD). The chain crosses the membrane as a helical span at residues 381–401 (EDHAVCSILMGLAMVEAISYV). The Cytoplasmic portion of the chain corresponds to 402 to 631 (REKTKTGVDM…RYSVEKEKQS (230 aa)). An ATP-binding site is contributed by Arg-412. A Glycyl lysine isopeptide (Lys-Gly) (interchain with G-Cter in SUMO3) cross-link involves residue Lys-465. The interval 504 to 564 (QNGLNGSAVP…DNPSFPNPRR (61 aa)) is disordered. 2 stretches are compositionally biased toward low complexity: residues 516 to 526 (APASSKPSSPA) and 535 to 544 (GSAHASGSTS). Ser-524 bears the Phosphoserine mark. Ser-579 bears the Phosphoserine mark. 3 helical membrane-spanning segments follow: residues 632–652 (GAAF…EILI), 663–683 (FVVG…AIFP), and 707–727 (WAML…LSCL). The N-linked (GlcNAc...) asparagine glycan is linked to Asn-735. 3 helical membrane passes run 753-773 (YNYV…VSHM), 774-794 (VKLT…LYAW), and 834-854 (LPLV…MLSF). Residues 855 to 1145 (YYFSRHVEKL…TLPHQVVDNP (291 aa)) lie on the Cytoplasmic side of the membrane. ATP-binding positions include Lys-976, 1063-1065 (DIW), and 1070-1074 (NVASR). Residue Ser-1077 is modified to Phosphoserine; by CaMK2. Lys-1110 is an ATP binding site.

The protein belongs to the adenylyl cyclase class-4/guanylyl cyclase family. Mg(2+) serves as cofactor. Requires Mn(2+) as cofactor. In terms of processing, N-glycosylated. Post-translationally, rapidly phosphorylated after stimulation by odorants or forskolin. Phosphorylation by CaMK2 at Ser-1077 down-regulates enzyme activity. Sumoylated. Sumoylation is required for targeting of olfactory cilia. Detected in the acrosomal region of epididymal spermatozoa, the acrosomal region of round spermatids and in elongating spermatids. Detected in cilia in the olfactory epithelium (at protein level). Detected in olfactory epithelium neurons. Detected in brain, testis, late pachytene spermatocytes, round spermatids and elongating spermatids.

Its subcellular location is the cell membrane. The protein resides in the cell projection. The protein localises to the cilium. It is found in the golgi apparatus. It localises to the cytoplasm. It carries out the reaction ATP = 3',5'-cyclic AMP + diphosphate. With respect to regulation, specifically activated by the G alpha protein GNAL/G(olf) in signaling cascades triggered by odorant receptors. Activated by forskolin. After forskolin treatment, activity is further increased by calcium/calmodulin. In the absence of forskolin, calcium/calmodulin has little effect on enzyme activity. In terms of biological role, catalyzes the formation of the signaling molecule cAMP in response to G-protein signaling. Participates in signaling cascades triggered by odorant receptors via its function in cAMP biosynthesis: specifically activated by G alpha protein GNAL/G(olf) in olfactory epithelium. Required for the perception of odorants. Required for normal sperm motility and normal male fertility. Plays a role in regulating insulin levels and body fat accumulation in response to a high fat diet. In Mus musculus (Mouse), this protein is Adenylate cyclase type 3 (Adcy3).